The following is a 149-amino-acid chain: HTH-type transcriptional regulator LrpB (149 aa).

The region spanning 3–64 (IDSIDFQILQ…VVDELKMGFS (62 aa)) is the HTH asnC-type domain. The H-T-H motif DNA-binding region spans 22 to 41 (WKEIGEKIHMTGQAVGNRIK).

In terms of biological role, negative regulation of glyA transcription and kinB-dependent sporulation. This chain is HTH-type transcriptional regulator LrpB (lrpB), found in Bacillus subtilis (strain 168).